We begin with the raw amino-acid sequence, 128 residues long: Transcription antitermination protein NusB (128 aa).

It belongs to the NusB family.

Its function is as follows. Involved in transcription antitermination. Required for transcription of ribosomal RNA (rRNA) genes. Binds specifically to the boxA antiterminator sequence of the ribosomal RNA (rrn) operons. The protein is Transcription antitermination protein NusB of Staphylococcus carnosus (strain TM300).